Reading from the N-terminus, the 649-residue chain is tRNA-guanine(15) transglycosylase (649 aa).

Asp-88 (nucleophile) is an active-site residue. Substrate is bound by residues Asp-123 and Ala-194. Zn(2+) contacts are provided by Cys-280, Cys-282, and Cys-285. One can recognise a PUA domain in the interval 573–648; sequence KYRIVIDSSV…VAATLRGGLK (76 aa).

It belongs to the archaeosine tRNA-ribosyltransferase family. Zn(2+) is required as a cofactor.

It carries out the reaction guanosine(15) in tRNA + 7-cyano-7-deazaguanine = 7-cyano-7-carbaguanosine(15) in tRNA + guanine. It participates in tRNA modification; archaeosine-tRNA biosynthesis. Functionally, exchanges the guanine residue with 7-cyano-7-deazaguanine (preQ0) at position 15 in the dihydrouridine loop (D-loop) of archaeal tRNAs. The protein is tRNA-guanine(15) transglycosylase of Methanococcus maripaludis (strain DSM 14266 / JCM 13030 / NBRC 101832 / S2 / LL).